The sequence spans 477 residues: tRNA-2-methylthio-N(6)-dimethylallyladenosine synthase (477 aa).

The region spanning 3-120 is the MTTase N-terminal domain; the sequence is KKLYIKTWGC…LPEMINELKG (118 aa). [4Fe-4S] cluster contacts are provided by Cys-12, Cys-49, Cys-83, Cys-157, Cys-161, and Cys-164. The Radical SAM core domain occupies 143–375; it reads RAEGPTAFVS…QQRITQQALR (233 aa). Residues 378–441 form the TRAM domain; sequence RHMVGTEQRI…TNSLRGEVVR (64 aa).

This sequence belongs to the methylthiotransferase family. MiaB subfamily. Monomer. [4Fe-4S] cluster serves as cofactor.

It is found in the cytoplasm. The enzyme catalyses N(6)-dimethylallyladenosine(37) in tRNA + (sulfur carrier)-SH + AH2 + 2 S-adenosyl-L-methionine = 2-methylsulfanyl-N(6)-dimethylallyladenosine(37) in tRNA + (sulfur carrier)-H + 5'-deoxyadenosine + L-methionine + A + S-adenosyl-L-homocysteine + 2 H(+). Functionally, catalyzes the methylthiolation of N6-(dimethylallyl)adenosine (i(6)A), leading to the formation of 2-methylthio-N6-(dimethylallyl)adenosine (ms(2)i(6)A) at position 37 in tRNAs that read codons beginning with uridine. The protein is tRNA-2-methylthio-N(6)-dimethylallyladenosine synthase of Alteromonas mediterranea (strain DSM 17117 / CIP 110805 / LMG 28347 / Deep ecotype).